The following is a 184-amino-acid chain: GTP cyclohydrolase 1 (184 aa).

C75, H78, and C146 together coordinate Zn(2+).

This sequence belongs to the GTP cyclohydrolase I family. As to quaternary structure, homomer.

The enzyme catalyses GTP + H2O = 7,8-dihydroneopterin 3'-triphosphate + formate + H(+). Its pathway is cofactor biosynthesis; 7,8-dihydroneopterin triphosphate biosynthesis; 7,8-dihydroneopterin triphosphate from GTP: step 1/1. This is GTP cyclohydrolase 1 from Coxiella burnetii (strain Dugway 5J108-111).